A 279-amino-acid chain; its full sequence is Energy-coupling factor transporter ATP-binding protein EcfA (279 aa).

An ABC transporter domain is found at 5–240 (IELEKINYKY…GPELIDLGLD (236 aa)). 40–47 (GHNGSGKS) contacts ATP.

It belongs to the ABC transporter superfamily. Energy-coupling factor EcfA family. As to quaternary structure, forms a stable energy-coupling factor (ECF) transporter complex composed of 2 membrane-embedded substrate-binding proteins (S component), 2 ATP-binding proteins (A component) and 2 transmembrane proteins (T component).

Its subcellular location is the cell membrane. In terms of biological role, ATP-binding (A) component of a common energy-coupling factor (ECF) ABC-transporter complex. Unlike classic ABC transporters this ECF transporter provides the energy necessary to transport a number of different substrates. This Enterococcus faecium (Streptococcus faecium) protein is Energy-coupling factor transporter ATP-binding protein EcfA.